A 216-amino-acid chain; its full sequence is Probable transaldolase (216 aa).

K83 (schiff-base intermediate with substrate) is an active-site residue.

It belongs to the transaldolase family. Type 3B subfamily.

It is found in the cytoplasm. It catalyses the reaction D-sedoheptulose 7-phosphate + D-glyceraldehyde 3-phosphate = D-erythrose 4-phosphate + beta-D-fructose 6-phosphate. The protein operates within carbohydrate degradation; pentose phosphate pathway; D-glyceraldehyde 3-phosphate and beta-D-fructose 6-phosphate from D-ribose 5-phosphate and D-xylulose 5-phosphate (non-oxidative stage): step 2/3. Transaldolase is important for the balance of metabolites in the pentose-phosphate pathway. The chain is Probable transaldolase from Hyphomonas neptunium (strain ATCC 15444).